We begin with the raw amino-acid sequence, 1099 residues long: Glutamine--fructose-6-phosphate aminotransferase [isomerizing] (1099 aa).

The Nucleophile; for GATase activity role is filled by C2. The Glutamine amidotransferase type-2; first part domain occupies 2–71; it reads CGIIGYIGND…DIDGNIGIGH (70 aa). An HTH cro/C1-type domain is found at 198-253; the sequence is LRKVREKLGLTRKDVEKLCGVKEIYIVKIETGKLESIEEERLKKLCSLYGINFEEI. The DOD-type homing endonuclease domain occupies 278-413; sequence IIGYIIGDGH…IQFLLLRFGI (136 aa). Residues 571–723 enclose the Glutamine amidotransferase type-2; second part domain; sequence SRWATHGNVC…DGDVVVIKKK (153 aa). SIS domains follow at residues 786 to 923 and 948 to 1089; these read LAKC…LLGR and TIKE…VDKP. Residue K1094 is the For Fru-6P isomerization activity of the active site.

This sequence in the C-terminal section; belongs to the SIS family. GFAT subfamily. As to quaternary structure, homodimer. Post-translationally, this protein undergoes a protein self splicing that involves a post-translational excision of the intervening region (intein) followed by peptide ligation.

Its subcellular location is the cytoplasm. The enzyme catalyses D-fructose 6-phosphate + L-glutamine = D-glucosamine 6-phosphate + L-glutamate. Its function is as follows. Catalyzes the first step in hexosamine metabolism, converting fructose-6P into glucosamine-6P using glutamine as a nitrogen source. The chain is Glutamine--fructose-6-phosphate aminotransferase [isomerizing] (glmS) from Methanocaldococcus jannaschii (strain ATCC 43067 / DSM 2661 / JAL-1 / JCM 10045 / NBRC 100440) (Methanococcus jannaschii).